We begin with the raw amino-acid sequence, 315 residues long: Methionyl-tRNA formyltransferase (315 aa).

113–116 (SLLP) serves as a coordination point for (6S)-5,6,7,8-tetrahydrofolate.

This sequence belongs to the Fmt family.

It carries out the reaction L-methionyl-tRNA(fMet) + (6R)-10-formyltetrahydrofolate = N-formyl-L-methionyl-tRNA(fMet) + (6S)-5,6,7,8-tetrahydrofolate + H(+). Attaches a formyl group to the free amino group of methionyl-tRNA(fMet). The formyl group appears to play a dual role in the initiator identity of N-formylmethionyl-tRNA by promoting its recognition by IF2 and preventing the misappropriation of this tRNA by the elongation apparatus. The protein is Methionyl-tRNA formyltransferase of Edwardsiella ictaluri (strain 93-146).